Reading from the N-terminus, the 318-residue chain is N-succinylornithine carbamoyltransferase (318 aa).

Carbamoyl phosphate-binding positions include 47-50 (SLRT), Trp75, and Arg110. Residue Glu142 participates in N(2)-succinyl-L-ornithine binding. 147 to 150 (HPLQ) is a binding site for carbamoyl phosphate. N(2)-succinyl-L-ornithine-binding residues include His176 and Lys236. A carbamoyl phosphate-binding site is contributed by 274–275 (CL). Arg278 is a binding site for N(2)-succinyl-L-ornithine. Arg302 contributes to the carbamoyl phosphate binding site.

Belongs to the aspartate/ornithine carbamoyltransferase superfamily. SOTCase family. As to quaternary structure, homotrimer.

The enzyme catalyses N(2)-succinyl-L-ornithine + carbamoyl phosphate = N(2)-succinyl-L-citrulline + phosphate + H(+). It functions in the pathway amino-acid biosynthesis; L-arginine biosynthesis. In terms of biological role, catalyzes the transfer of the carbamoyl group from carbamoyl phosphate to the delta-amino group of N(2)-succinyl-L-ornithine to produce N(2)-succinyl-L-citrulline. Is essential for arginine biosynthesis. Has no activity with either L-ornithine or L-aspartate as substrate. Also has no detectable AOTCase activity, being unable to convert N(2)-acetyl-L-ornithine to N(2)-acetyl-L-citrulline. This chain is N-succinylornithine carbamoyltransferase, found in Bacteroides fragilis (strain 638R).